Consider the following 245-residue polypeptide: Ureidoacrylate amidohydrolase RutB (245 aa).

Aspartate 41 (proton acceptor) is an active-site residue. Lysine 150 is an active-site residue. Cysteine 183 (nucleophile) is an active-site residue.

Belongs to the isochorismatase family. RutB subfamily.

The catalysed reaction is (Z)-3-ureidoacrylate + H2O + H(+) = (Z)-3-aminoacrylate + NH4(+) + CO2. It catalyses the reaction (Z)-3-ureidoacrylate + H2O = (Z)-3-aminoacrylate + carbamate + H(+). The enzyme catalyses (Z)-2-methylureidoacrylate + H2O + H(+) = (Z)-2-methylaminoacrylate + NH4(+) + CO2. In terms of biological role, hydrolyzes ureidoacrylate to form aminoacrylate and carbamate. The carbamate hydrolyzes spontaneously, thereby releasing one of the nitrogen atoms of the pyrimidine ring as ammonia and one of its carbon atoms as CO2. This Pseudomonas syringae pv. syringae (strain B728a) protein is Ureidoacrylate amidohydrolase RutB.